We begin with the raw amino-acid sequence, 317 residues long: Olfactory receptor 10A5 (317 aa).

Residues 1–26 lie on the Extracellular side of the membrane; it reads MAIGNWTEISEFILMSFSSLPTEIQS. Asparagine 5 carries N-linked (GlcNAc...) asparagine glycosylation. A helical transmembrane segment spans residues 27–47; it reads LLFLTFLTIYLVTLKGNSLII. Residues 48-55 lie on the Cytoplasmic side of the membrane; that stretch reads LVTLADPM. The chain crosses the membrane as a helical span at residues 56-76; sequence LHSPMYFFLRNLSFLEIGFNL. Topologically, residues 77-100 are extracellular; it reads VIVPKMLGTLLAQDTTISFLGCAT. Cysteine 98 and cysteine 190 are disulfide-bonded. Residues 101-121 traverse the membrane as a helical segment; it reads QMYFFFFFGVAECFLLATMAY. At 122–140 the chain is on the cytoplasmic side; the sequence is DRYVAICSPLHYPVIMNQR. Residues 141–161 form a helical membrane-spanning segment; that stretch reads TRAKLAAASWFPGFPVATVQT. The Extracellular segment spans residues 162–198; that stretch reads TWLFSFPFCGTNKVNHFFCDSPPVLKLVCADTALFEI. A helical membrane pass occupies residues 199 to 218; it reads YAIVGTILVVMIPCLLILCS. Over 219–238 the chain is Cytoplasmic; it reads YTRIAAAILKIPSAKGKHKA. Residues 239–259 form a helical membrane-spanning segment; the sequence is FSTCSSHLLVVSLFYISSSLT. Residues 260–272 lie on the Extracellular side of the membrane; the sequence is YFWPKSNNSPESK. Residues 273-293 form a helical membrane-spanning segment; that stretch reads KLLSLSYTVVTPMLNPIIYSL. Over 294–317 the chain is Cytoplasmic; that stretch reads RNSEVKNALSRTFHKVLALRNCIP.

This sequence belongs to the G-protein coupled receptor 1 family. Expressed in the tongue.

The protein localises to the cell membrane. In terms of biological role, odorant receptor (Potential). May be involved in taste perception. The protein is Olfactory receptor 10A5 (OR10A5) of Homo sapiens (Human).